Consider the following 362-residue polypeptide: MAGSSIGQLFKVTTFGESHGAAIGCIVDGIPPNLEICEADLQHDLDRRRPGQSRYTTMRQEKDQVKILSGVFEGKTTGSSIGLMIENTDQRSKDYSEIKDLFRPGHADYTYHQKFGHRDYRGGGRSSARETAMRVAAGAIAKKYLNEQFGIVIRGYLSQLGDIKADSIDLDEVENNPFFFPDLSKITQLEDYMKALIKEGNSVGAKVTVVASSVPVGLGEPVFDRLDAELAHSLMSINAVKGVEIGDGFAAVSQKGTEHRDEMTPGGFLSNHAGGILGGISTGQDIIAHIALKPTSSLTIPGRTITTNGEATTMITKGRHDPCVGIRAVPIAEAQMAITLLDHLLRHRAQNLHVTTNTPFIK.

Residues arginine 48 and arginine 54 each contribute to the NADP(+) site. FMN-binding positions include 125–127, 238–239, glycine 278, 293–297, and arginine 319; these read RSS, NA, and KPTSS.

This sequence belongs to the chorismate synthase family. In terms of assembly, homotetramer. FMNH2 is required as a cofactor.

The catalysed reaction is 5-O-(1-carboxyvinyl)-3-phosphoshikimate = chorismate + phosphate. It participates in metabolic intermediate biosynthesis; chorismate biosynthesis; chorismate from D-erythrose 4-phosphate and phosphoenolpyruvate: step 7/7. In terms of biological role, catalyzes the anti-1,4-elimination of the C-3 phosphate and the C-6 proR hydrogen from 5-enolpyruvylshikimate-3-phosphate (EPSP) to yield chorismate, which is the branch point compound that serves as the starting substrate for the three terminal pathways of aromatic amino acid biosynthesis. This reaction introduces a second double bond into the aromatic ring system. The chain is Chorismate synthase from Psychromonas ingrahamii (strain DSM 17664 / CCUG 51855 / 37).